The following is a 514-amino-acid chain: Glycosyltransferase-like At3g57200 (514 aa).

The segment at 1 to 23 (MAGLYSSSSSSKPTLSSSPSSSS) is disordered. Residues 1–39 (MAGLYSSSSSSKPTLSSSPSSSSSSRLFLLVTLLPLSLA) form the signal peptide. Asparagine 156, asparagine 187, asparagine 251, and asparagine 460 each carry an N-linked (GlcNAc...) asparagine glycan. Residues 457-514 (PSKNSSTADSTSGITRESSQETGKRRVLEFHLDVDGESQASAVPPQSPPGLEATQMEL) are disordered. Residues 458–473 (SKNSSTADSTSGITRE) show a composition bias toward polar residues. The segment covering 474–490 (SSQETGKRRVLEFHLDV) has biased composition (basic and acidic residues).

Belongs to the glycosyltransferase 25 family.

It localises to the secreted. Its subcellular location is the cell wall. It is found in the cytoplasm. The protein resides in the cell membrane. In terms of biological role, involved in the coordination between cell elongation and cellulose synthesis by promoting the expression of genes involved in cell elongation and cellulose synthesis. Acts as a regulator of plasmodesmatal permeability. Maybe a glycosyltransferase. This chain is Glycosyltransferase-like At3g57200, found in Arabidopsis thaliana (Mouse-ear cress).